A 389-amino-acid chain; its full sequence is Chalcone synthase 4 (389 aa).

The active site involves cysteine 164.

It belongs to the thiolase-like superfamily. Chalcone/stilbene synthases family.

The enzyme catalyses (E)-4-coumaroyl-CoA + 3 malonyl-CoA + 3 H(+) = 2',4,4',6'-tetrahydroxychalcone + 3 CO2 + 4 CoA. Its pathway is secondary metabolite biosynthesis; flavonoid biosynthesis. Functionally, the primary product of this enzyme is 4,2',4',6'-tetrahydroxychalcone (also termed naringenin-chalcone or chalcone) which can under specific conditions spontaneously isomerize into naringenin. This Medicago sativa (Alfalfa) protein is Chalcone synthase 4 (CHS4).